A 273-amino-acid chain; its full sequence is NAD(P)H-hydrate epimerase (273 aa).

Residues 52-260 (AQQIDQELFN…GIIQKYELNL (209 aa)) enclose the YjeF N-terminal domain. Residue 105–109 (NNGGD) coordinates (6S)-NADPHX. K(+)-binding residues include Asn106 and Asp170. (6S)-NADPHX is bound by residues 174–180 (GFSFKGE) and Asp203. Ser206 lines the K(+) pocket.

It belongs to the NnrE/AIBP family. It depends on K(+) as a cofactor.

The enzyme catalyses (6R)-NADHX = (6S)-NADHX. It carries out the reaction (6R)-NADPHX = (6S)-NADPHX. In terms of biological role, catalyzes the epimerization of the S- and R-forms of NAD(P)HX, a damaged form of NAD(P)H that is a result of enzymatic or heat-dependent hydration. This is a prerequisite for the S-specific NAD(P)H-hydrate dehydratase to allow the repair of both epimers of NAD(P)HX. This Branchiostoma floridae (Florida lancelet) protein is NAD(P)H-hydrate epimerase.